Here is a 264-residue protein sequence, read N- to C-terminus: Cell division protein FtsQ (264 aa).

Positions methionine 1 to arginine 24 are disordered. At methionine 1–threonine 32 the chain is on the cytoplasmic side. Residues isoleucine 33–glycine 53 form a helical membrane-spanning segment. Topologically, residues serine 54–serine 264 are extracellular. A POTRA domain is found at threonine 57–arginine 126.

The protein belongs to the FtsQ/DivIB family. FtsQ subfamily.

It localises to the cell membrane. Functionally, essential cell division protein. In Streptomyces coelicolor (strain ATCC BAA-471 / A3(2) / M145), this protein is Cell division protein FtsQ.